The sequence spans 317 residues: tRNA dimethylallyltransferase (317 aa).

14-21 is a binding site for ATP; that stretch reads GPTAVGKT. 16-21 is a binding site for substrate; the sequence is TAVGKT. Residues 39 to 42 are interaction with substrate tRNA; it reads DSMQ.

The protein belongs to the IPP transferase family. As to quaternary structure, monomer. The cofactor is Mg(2+).

The enzyme catalyses adenosine(37) in tRNA + dimethylallyl diphosphate = N(6)-dimethylallyladenosine(37) in tRNA + diphosphate. Functionally, catalyzes the transfer of a dimethylallyl group onto the adenine at position 37 in tRNAs that read codons beginning with uridine, leading to the formation of N6-(dimethylallyl)adenosine (i(6)A). The protein is tRNA dimethylallyltransferase of Bacillus cereus (strain Q1).